Consider the following 94-residue polypeptide: Secretoglobin family 1C member 1 (94 aa).

Residues 1-22 form the signal peptide; that stretch reads MKGSSALLVALTVLCICGLTRA.

This sequence belongs to the secretoglobin family. As to expression, expressed in the olfactory mucosa.

It localises to the secreted. In Rattus norvegicus (Rat), this protein is Secretoglobin family 1C member 1 (Scgb1c1).